Here is a 335-residue protein sequence, read N- to C-terminus: Tetraacyldisaccharide 4'-kinase (335 aa).

58–65 contributes to the ATP binding site; it reads TVGGNGKT.

This sequence belongs to the LpxK family.

The catalysed reaction is a lipid A disaccharide + ATP = a lipid IVA + ADP + H(+). It participates in glycolipid biosynthesis; lipid IV(A) biosynthesis; lipid IV(A) from (3R)-3-hydroxytetradecanoyl-[acyl-carrier-protein] and UDP-N-acetyl-alpha-D-glucosamine: step 6/6. In terms of biological role, transfers the gamma-phosphate of ATP to the 4'-position of a tetraacyldisaccharide 1-phosphate intermediate (termed DS-1-P) to form tetraacyldisaccharide 1,4'-bis-phosphate (lipid IVA). The polypeptide is Tetraacyldisaccharide 4'-kinase (Dichelobacter nodosus (strain VCS1703A)).